The sequence spans 350 residues: Heme A synthase (350 aa).

8 helical membrane passes run 14-34 (VAIW…IGGF), 95-115 (YVHR…FIYF), 125-145 (VVIK…AGWY), 162-182 (LALH…QFFD), 202-222 (VGII…VAGL), 260-280 (VQFI…ILTV), 296-316 (IIQI…AIAI), and 317-337 (AHQV…CYLR). Histidine 264 is a binding site for heme. Residue histidine 318 coordinates heme.

Belongs to the COX15/CtaA family. Type 2 subfamily. In terms of assembly, interacts with CtaB. Heme b is required as a cofactor.

The protein resides in the cell membrane. It catalyses the reaction Fe(II)-heme o + 2 A + H2O = Fe(II)-heme a + 2 AH2. It functions in the pathway porphyrin-containing compound metabolism; heme A biosynthesis; heme A from heme O: step 1/1. Its function is as follows. Catalyzes the conversion of heme O to heme A by two successive hydroxylations of the methyl group at C8. The first hydroxylation forms heme I, the second hydroxylation results in an unstable dihydroxymethyl group, which spontaneously dehydrates, resulting in the formyl group of heme A. This Wolbachia pipientis wMel protein is Heme A synthase.